We begin with the raw amino-acid sequence, 921 residues long: Collagen alpha-1(IX) chain (921 aa).

Positions 1–23 are cleaved as a signal peptide; that stretch reads MKTCWKIPVFFFVCSFLEPWASA. Residues 24-268 are nonhelical region (NC4); the sequence is AVKRRPRFPV…ITPSQTTDER (245 aa). Disulfide bonds link cysteine 44–cysteine 242 and cysteine 198–cysteine 252. The Laminin G-like domain occupies 50-244; sequence GQDDLPGFDL…LQWMLIHCDP (195 aa). Asparagine 171 carries N-linked (GlcNAc...) asparagine glycosylation. Zn(2+)-binding residues include aspartate 213, aspartate 215, and histidine 253. 2 disordered regions span residues 254–759 and 783–905; these read ELPA…APTD and RPDS…EPAS. Collagen-like domains are found at residues 269 to 324, 325 to 356, 358 to 403, 416 to 472, 473 to 516, 587 to 643, 655 to 712, and 713 to 755; these read GPPG…TPGA, DGLT…GFPG, GIPG…GTIG, PPGR…GLRG, ITGI…AGPK, EKGS…GKLG, GPPG…GEPG, and LRGP…PPGR. Residues 269–405 form a triple-helical region (COL3) region; sequence GPPGEQGPPG…PGPRGTIGFH (137 aa). Pro residues-rich tracts occupy residues 273–285 and 298–307; these read EQGP…PPGV and KGPPGPPGPA. Positions 368-383 are enriched in low complexity; the sequence is TAGLPGELGRVGPVGD. The span at 387-398 shows a compositional bias: pro residues; sequence RGPPGPPGPPGP. Residues 406–417 form a nonhelical region (NC3) region; that stretch reads DGDPLCPNACPP. Residues 418–756 are triple-helical region (COL2); the sequence is GRSGYPGLPG…PGVQGPPGRA (339 aa). Over residues 479 to 489 the composition is skewed to basic and acidic residues; the sequence is DKGEKGARGLD. Composition is skewed to low complexity over residues 602–621 and 630–650; these read NSGK…RGPQ and LGPV…SPGL. The segment at 757 to 786 is nonhelical region (NC2); that stretch reads PTDQHIKQVCMRVIQEHFAEMAASLKRPDS. The segment at 787–901 is triple-helical region (COL1); sequence GATGLPGRPG…PGPPGLPGFC (115 aa). Collagen-like domains are found at residues 790-847 and 848-899; these read GLPG…GPPG and RGPN…GLPG. Over residues 794-804 the composition is skewed to pro residues; that stretch reads RPGPPGPPGPP. A compositionally biased stretch (basic and acidic residues) spans 833 to 845; it reads PKGDLGEKGERGP. Pro residues predominate over residues 888-897; the sequence is VPGPPGPPGL. The tract at residues 902-921 is nonhelical region (NC1); that stretch reads EPASCTMQAGQRAFNKGPDP.

Belongs to the fibril-associated collagens with interrupted helices (FACIT) family. In terms of assembly, heterotrimer of an alpha 1(IX), an alpha 2(IX) and an alpha 3(IX) chain. In terms of processing, covalently linked to the telopeptides of type II collagen by lysine-derived cross-links. Post-translationally, prolines at the third position of the tripeptide repeating unit (G-X-Y) are hydroxylated in some or all of the chains.

It is found in the secreted. The protein localises to the extracellular space. The protein resides in the extracellular matrix. Structural component of hyaline cartilage and vitreous of the eye. The protein is Collagen alpha-1(IX) chain (COL9A1) of Homo sapiens (Human).